The chain runs to 72 residues: Large ribosomal subunit protein bL28 (72 aa).

The protein belongs to the bacterial ribosomal protein bL28 family.

This chain is Large ribosomal subunit protein bL28, found in Chlorobium chlorochromatii (strain CaD3).